Consider the following 195-residue polypeptide: MVENIEVSNLNVKVFGKWDTKVEVRDPSLKKYIDLMSIYLPHTGGRHEHRRFGKSRIPIVERLINNLMRPGRNKGKKMLAYNIVKTTFDIIAVKTGQNPIQVLVRAIENAAPREEVTRIMYGGIVYYVAVDVAPQRRVDLALRHLVTGASEASFNNPKPIEEALAEEIIAAANNDNKSVAIRKKEEIERIALSSR.

Belongs to the universal ribosomal protein uS7 family. Part of the 30S ribosomal subunit.

Its function is as follows. One of the primary rRNA binding proteins, it binds directly to 16S rRNA where it nucleates assembly of the head domain of the 30S subunit. Is located at the subunit interface close to the decoding center. The polypeptide is Small ribosomal subunit protein uS7 (Sulfolobus acidocaldarius (strain ATCC 33909 / DSM 639 / JCM 8929 / NBRC 15157 / NCIMB 11770)).